The primary structure comprises 99 residues: High mobility group nucleosome-binding domain-containing protein 3 (99 aa).

Basic and acidic residues-rich tracts occupy residues methionine 1 to arginine 25, proline 39 to glycine 53, and glycine 62 to lysine 72. Positions methionine 1–glutamate 99 are disordered. Position 6 is a phosphoserine (serine 6). Threonine 10 is modified (phosphothreonine). Phosphoserine is present on residues serine 78 and serine 93. Residues glycine 81–serine 93 are compositionally biased toward basic and acidic residues.

The protein belongs to the HMGN family. As to quaternary structure, interacts with the ligand binding domain of the thyroid receptor (TR) (in vitro). Requires the presence of thyroid hormone for its interaction. Interacts with transcriptional regulator SEHBP. Interacts with nucleosomes. As to expression, expressed in kidney, lung, pancreas, testis, skeletal muscle, heart, thyroid gland, pituitary gland, prostate and uterus. Low expression in liver, spleen, placenta and ovaries.

Its subcellular location is the nucleus. Its function is as follows. Binds to nucleosomes, regulating chromatin structure and consequently, chromatin-dependent processes such as transcription, DNA replication and DNA repair. Affects both insulin and glucagon levels and modulates the expression of pancreatic genes involved in insulin secretion. Regulates the expression of the glucose transporter SLC2A2 by binding specifically to its promoter region and recruiting PDX1 and additional transcription factors. Regulates the expression of SLC6A9, a glycine transporter which regulates the glycine concentration in synaptic junctions in the central nervous system, by binding to its transcription start site. May play a role in ocular development and astrocyte function. The protein is High mobility group nucleosome-binding domain-containing protein 3 (HMGN3) of Homo sapiens (Human).